The following is a 252-amino-acid chain: 14-3-3 protein homolog 1 (252 aa).

It belongs to the 14-3-3 family.

This chain is 14-3-3 protein homolog 1, found in Schistosoma mansoni (Blood fluke).